The primary structure comprises 427 residues: Glutamate-1-semialdehyde 2,1-aminomutase (427 aa).

Residue Lys265 is modified to N6-(pyridoxal phosphate)lysine.

The protein belongs to the class-III pyridoxal-phosphate-dependent aminotransferase family. HemL subfamily. In terms of assembly, homodimer. Requires pyridoxal 5'-phosphate as cofactor.

The protein localises to the cytoplasm. The catalysed reaction is (S)-4-amino-5-oxopentanoate = 5-aminolevulinate. It functions in the pathway porphyrin-containing compound metabolism; protoporphyrin-IX biosynthesis; 5-aminolevulinate from L-glutamyl-tRNA(Glu): step 2/2. In Neisseria meningitidis serogroup B (strain ATCC BAA-335 / MC58), this protein is Glutamate-1-semialdehyde 2,1-aminomutase.